Consider the following 363-residue polypeptide: Phosphoserine aminotransferase (363 aa).

Position 42 (arginine 42) interacts with L-glutamate. Pyridoxal 5'-phosphate-binding positions include 76-77, tryptophan 102, threonine 156, aspartate 175, and glutamine 198; that span reads GR. The residue at position 199 (lysine 199) is an N6-(pyridoxal phosphate)lysine. 240 to 241 lines the pyridoxal 5'-phosphate pocket; that stretch reads NT.

This sequence belongs to the class-V pyridoxal-phosphate-dependent aminotransferase family. SerC subfamily. Homodimer. Pyridoxal 5'-phosphate serves as cofactor.

It is found in the cytoplasm. The enzyme catalyses O-phospho-L-serine + 2-oxoglutarate = 3-phosphooxypyruvate + L-glutamate. It carries out the reaction 4-(phosphooxy)-L-threonine + 2-oxoglutarate = (R)-3-hydroxy-2-oxo-4-phosphooxybutanoate + L-glutamate. It functions in the pathway amino-acid biosynthesis; L-serine biosynthesis; L-serine from 3-phospho-D-glycerate: step 2/3. The protein operates within cofactor biosynthesis; pyridoxine 5'-phosphate biosynthesis; pyridoxine 5'-phosphate from D-erythrose 4-phosphate: step 3/5. Functionally, catalyzes the reversible conversion of 3-phosphohydroxypyruvate to phosphoserine and of 3-hydroxy-2-oxo-4-phosphonooxybutanoate to phosphohydroxythreonine. The polypeptide is Phosphoserine aminotransferase (Shewanella frigidimarina (strain NCIMB 400)).